The primary structure comprises 122 residues: Large ribosomal subunit protein uL14 (122 aa).

It belongs to the universal ribosomal protein uL14 family. As to quaternary structure, part of the 50S ribosomal subunit. Forms a cluster with proteins L3 and L19. In the 70S ribosome, L14 and L19 interact and together make contacts with the 16S rRNA in bridges B5 and B8.

Functionally, binds to 23S rRNA. Forms part of two intersubunit bridges in the 70S ribosome. In Levilactobacillus brevis (strain ATCC 367 / BCRC 12310 / CIP 105137 / JCM 1170 / LMG 11437 / NCIMB 947 / NCTC 947) (Lactobacillus brevis), this protein is Large ribosomal subunit protein uL14.